Here is a 158-residue protein sequence, read N- to C-terminus: SsrA-binding protein (158 aa).

Belongs to the SmpB family.

It localises to the cytoplasm. Its function is as follows. Required for rescue of stalled ribosomes mediated by trans-translation. Binds to transfer-messenger RNA (tmRNA), required for stable association of tmRNA with ribosomes. tmRNA and SmpB together mimic tRNA shape, replacing the anticodon stem-loop with SmpB. tmRNA is encoded by the ssrA gene; the 2 termini fold to resemble tRNA(Ala) and it encodes a 'tag peptide', a short internal open reading frame. During trans-translation Ala-aminoacylated tmRNA acts like a tRNA, entering the A-site of stalled ribosomes, displacing the stalled mRNA. The ribosome then switches to translate the ORF on the tmRNA; the nascent peptide is terminated with the 'tag peptide' encoded by the tmRNA and targeted for degradation. The ribosome is freed to recommence translation, which seems to be the essential function of trans-translation. This Hydrogenovibrio crunogenus (strain DSM 25203 / XCL-2) (Thiomicrospira crunogena) protein is SsrA-binding protein.